A 299-amino-acid chain; its full sequence is Probable lipid kinase YegS (299 aa).

Positions 2–133 constitute a DAGKc domain; the sequence is AEFPASLLIL…IDMAQVNKQT (132 aa). Residues threonine 40, 66 to 72, and threonine 95 each bind ATP; that span reads GDGTINE. Residues leucine 215, aspartate 218, and leucine 220 each contribute to the Mg(2+) site. Glutamate 271 serves as the catalytic Proton acceptor.

The protein belongs to the diacylglycerol/lipid kinase family. YegS lipid kinase subfamily. Mg(2+) serves as cofactor. Requires Ca(2+) as cofactor.

Its subcellular location is the cytoplasm. In terms of biological role, probably phosphorylates lipids; the in vivo substrate is unknown. The chain is Probable lipid kinase YegS from Escherichia coli O17:K52:H18 (strain UMN026 / ExPEC).